A 176-amino-acid chain; its full sequence is Ribosome maturation factor RimM (176 aa).

The 74-residue stretch at 100–173 (PEEYYDYQLI…RLRIDPPPGL (74 aa)) folds into the PRC barrel domain.

Belongs to the RimM family. In terms of assembly, binds ribosomal protein uS19.

It localises to the cytoplasm. Its function is as follows. An accessory protein needed during the final step in the assembly of 30S ribosomal subunit, possibly for assembly of the head region. Essential for efficient processing of 16S rRNA. May be needed both before and after RbfA during the maturation of 16S rRNA. It has affinity for free ribosomal 30S subunits but not for 70S ribosomes. The chain is Ribosome maturation factor RimM from Acidothermus cellulolyticus (strain ATCC 43068 / DSM 8971 / 11B).